The chain runs to 430 residues: Glutamate-1-semialdehyde 2,1-aminomutase (430 aa).

Lysine 265 is modified (N6-(pyridoxal phosphate)lysine).

It belongs to the class-III pyridoxal-phosphate-dependent aminotransferase family. HemL subfamily. In terms of assembly, homodimer. It depends on pyridoxal 5'-phosphate as a cofactor.

Its subcellular location is the cytoplasm. It carries out the reaction (S)-4-amino-5-oxopentanoate = 5-aminolevulinate. The protein operates within porphyrin-containing compound metabolism; protoporphyrin-IX biosynthesis; 5-aminolevulinate from L-glutamyl-tRNA(Glu): step 2/2. This is Glutamate-1-semialdehyde 2,1-aminomutase from Shewanella baltica (strain OS223).